A 483-amino-acid polypeptide reads, in one-letter code: UDP-N-acetylmuramate--L-alanine ligase (483 aa).

128-134 (GTHGKTT) serves as a coordination point for ATP.

The protein belongs to the MurCDEF family.

The protein resides in the cytoplasm. It catalyses the reaction UDP-N-acetyl-alpha-D-muramate + L-alanine + ATP = UDP-N-acetyl-alpha-D-muramoyl-L-alanine + ADP + phosphate + H(+). Its pathway is cell wall biogenesis; peptidoglycan biosynthesis. Its function is as follows. Cell wall formation. This Shewanella violacea (strain JCM 10179 / CIP 106290 / LMG 19151 / DSS12) protein is UDP-N-acetylmuramate--L-alanine ligase.